Reading from the N-terminus, the 231-residue chain is Large ribosomal subunit protein uL1 (231 aa).

This sequence belongs to the universal ribosomal protein uL1 family. Part of the 50S ribosomal subunit.

Functionally, binds directly to 23S rRNA. The L1 stalk is quite mobile in the ribosome, and is involved in E site tRNA release. In terms of biological role, protein L1 is also a translational repressor protein, it controls the translation of the L11 operon by binding to its mRNA. The polypeptide is Large ribosomal subunit protein uL1 (Ralstonia nicotianae (strain ATCC BAA-1114 / GMI1000) (Ralstonia solanacearum)).